The following is a 125-amino-acid chain: Small ribosomal subunit protein uS12 (125 aa).

Aspartate 89 is subject to 3-methylthioaspartic acid.

Belongs to the universal ribosomal protein uS12 family. In terms of assembly, part of the 30S ribosomal subunit. Contacts proteins S8 and S17. May interact with IF1 in the 30S initiation complex.

Functionally, with S4 and S5 plays an important role in translational accuracy. Interacts with and stabilizes bases of the 16S rRNA that are involved in tRNA selection in the A site and with the mRNA backbone. Located at the interface of the 30S and 50S subunits, it traverses the body of the 30S subunit contacting proteins on the other side and probably holding the rRNA structure together. The combined cluster of proteins S8, S12 and S17 appears to hold together the shoulder and platform of the 30S subunit. This chain is Small ribosomal subunit protein uS12, found in Clostridium botulinum (strain ATCC 19397 / Type A).